The primary structure comprises 60 residues: Large ribosomal subunit protein bL32 (60 aa).

Residues 1 to 23 form a disordered region; it reads MAVPRNRHSNARKNIRRSHHAKQ.

It belongs to the bacterial ribosomal protein bL32 family.

The protein is Large ribosomal subunit protein bL32 of Chlamydia abortus (strain DSM 27085 / S26/3) (Chlamydophila abortus).